The chain runs to 79 residues: Acyl carrier protein (79 aa).

The Carrier domain maps to 2-77 (SEIGERVKKI…DATKFLEKNA (76 aa)). Ser37 is subject to O-(pantetheine 4'-phosphoryl)serine.

It belongs to the acyl carrier protein (ACP) family. Post-translationally, 4'-phosphopantetheine is transferred from CoA to a specific serine of apo-ACP by AcpS. This modification is essential for activity because fatty acids are bound in thioester linkage to the sulfhydryl of the prosthetic group.

It localises to the cytoplasm. Its pathway is lipid metabolism; fatty acid biosynthesis. Functionally, carrier of the growing fatty acid chain in fatty acid biosynthesis. This Afipia carboxidovorans (strain ATCC 49405 / DSM 1227 / KCTC 32145 / OM5) (Oligotropha carboxidovorans) protein is Acyl carrier protein.